The chain runs to 223 residues: Ras-related protein Rab-37 (223 aa).

Residues 1-23 (MTGTPGAVATRDGEAPERSPPCS) are disordered. Thr2 carries the post-translational modification N-acetylthreonine. Thr38, Gly39, Val40, Gly41, Lys42, Thr43, Cys44, and Thr62 together coordinate GTP. Residue Thr43 participates in Mg(2+) binding. 2 short sequence motifs (switch) span residues 52-67 (GAFLSGTFIATVGIDF) and 85-102 (DTAGQERFRSVTHAYYRD). The Mg(2+) site is built by Thr62 and Asp85. GTP-binding residues include Gly88, Asn143, Lys144, Asp146, Met147, Ser173, Ala174, and Lys175. 2 S-geranylgeranyl cysteine lipidation sites follow: Cys219 and Cys220. Cys220 carries the post-translational modification Cysteine methyl ester. The propeptide at 221–223 (SFM) is removed in mature form.

Belongs to the small GTPase superfamily. Rab family. Interacts with RIMS1. Interacts (in GDP-bound form) with RPGR, RPGR functions as guanine exchange factor (GEF). Mg(2+) is required as a cofactor.

It localises to the cytoplasmic vesicle. The protein resides in the cell projection. The protein localises to the cilium. The enzyme catalyses GTP + H2O = GDP + phosphate + H(+). Its activity is regulated as follows. Regulated by guanine nucleotide exchange factors (GEFs) including RPGR which promote the exchange of bound GDP for free GTP. Regulated by GTPase activating proteins (GAPs) which increase the GTP hydrolysis activity. Inhibited by GDP dissociation inhibitors (GDIs). Functionally, the small GTPases Rab are key regulators of intracellular membrane trafficking, from the formation of transport vesicles to their fusion with membranes. Rabs cycle between an inactive GDP-bound form and an active GTP-bound form that is able to recruit to membranes different sets of downstream effectors directly responsible for vesicle formation, movement, tethering and fusion. Acts as an organizer for autophagosome biogenesis in a GTP-dependent manner. Involved in retinal homeostasis by autophagy regulation. This chain is Ras-related protein Rab-37, found in Homo sapiens (Human).